The primary structure comprises 251 residues: Hydroxyacylglutathione hydrolase (251 aa).

The Zn(2+) site is built by histidine 53, histidine 55, aspartate 57, histidine 58, histidine 110, aspartate 127, and histidine 165.

This sequence belongs to the metallo-beta-lactamase superfamily. Glyoxalase II family. Monomer. Zn(2+) serves as cofactor.

The catalysed reaction is an S-(2-hydroxyacyl)glutathione + H2O = a 2-hydroxy carboxylate + glutathione + H(+). The protein operates within secondary metabolite metabolism; methylglyoxal degradation; (R)-lactate from methylglyoxal: step 2/2. Thiolesterase that catalyzes the hydrolysis of S-D-lactoyl-glutathione to form glutathione and D-lactic acid. This Escherichia coli O9:H4 (strain HS) protein is Hydroxyacylglutathione hydrolase.